Here is a 642-residue protein sequence, read N- to C-terminus: Chaperone protein DnaK (642 aa).

At Thr200 the chain carries Phosphothreonine; by autocatalysis. Low complexity predominate over residues 603-623; the sequence is AAAAEQGGNADAASGNAQASK. Residues 603–627 form a disordered region; the sequence is AAAAEQGGNADAASGNAQASKAADD.

Belongs to the heat shock protein 70 family.

Its function is as follows. Acts as a chaperone. The sequence is that of Chaperone protein DnaK from Xanthomonas campestris pv. campestris (strain B100).